A 122-amino-acid chain; its full sequence is Large ribosomal subunit protein uL14 (122 aa).

The protein belongs to the universal ribosomal protein uL14 family. In terms of assembly, part of the 50S ribosomal subunit. Forms a cluster with proteins L3 and L19. In the 70S ribosome, L14 and L19 interact and together make contacts with the 16S rRNA in bridges B5 and B8.

Functionally, binds to 23S rRNA. Forms part of two intersubunit bridges in the 70S ribosome. This Aliarcobacter butzleri (strain RM4018) (Arcobacter butzleri) protein is Large ribosomal subunit protein uL14.